A 138-amino-acid polypeptide reads, in one-letter code: Large ribosomal subunit protein bL17 (138 aa).

This sequence belongs to the bacterial ribosomal protein bL17 family. In terms of assembly, part of the 50S ribosomal subunit. Contacts protein L32.

This is Large ribosomal subunit protein bL17 from Halorhodospira halophila (strain DSM 244 / SL1) (Ectothiorhodospira halophila (strain DSM 244 / SL1)).